We begin with the raw amino-acid sequence, 341 residues long: Mitochondrial glutathione transporter SLC25A40 (341 aa).

Solcar repeat units lie at residues 14–132 (ITPS…LRDI), 140–224 (RAEI…VKQS), and 234–328 (PTFA…GKSF). 6 helical membrane passes run 20-40 (MIAS…LDVV), 104-124 (LWSG…IYFT), 143-163 (IASL…ISPL), 200-221 (WGPT…YELV), 236-256 (FAIS…VTLP), and 299-319 (GLFA…AIMI).

This sequence belongs to the mitochondrial carrier (TC 2.A.29) family.

It localises to the mitochondrion inner membrane. It carries out the reaction glutathione(in) = glutathione(out). Probable mitochondrial transporter required for glutathione import into mitochondria. Glutathione, which plays key roles in oxidative metabolism, is produced exclusively in the cytosol and is imported in many organelles. Mitochondrial glutathione is required for the activity and stability of proteins containing iron-sulfur clusters. The chain is Mitochondrial glutathione transporter SLC25A40 from Xenopus tropicalis (Western clawed frog).